The sequence spans 416 residues: Gamma-glutamyl phosphate reductase (416 aa).

This sequence belongs to the gamma-glutamyl phosphate reductase family.

It is found in the cytoplasm. It catalyses the reaction L-glutamate 5-semialdehyde + phosphate + NADP(+) = L-glutamyl 5-phosphate + NADPH + H(+). The protein operates within amino-acid biosynthesis; L-proline biosynthesis; L-glutamate 5-semialdehyde from L-glutamate: step 2/2. Functionally, catalyzes the NADPH-dependent reduction of L-glutamate 5-phosphate into L-glutamate 5-semialdehyde and phosphate. The product spontaneously undergoes cyclization to form 1-pyrroline-5-carboxylate. This is Gamma-glutamyl phosphate reductase from Vibrio vulnificus (strain CMCP6).